Here is a 227-residue protein sequence, read N- to C-terminus: NAD(P)H-quinone oxidoreductase subunit K, chloroplastic (227 aa).

[4Fe-4S] cluster-binding residues include cysteine 43, cysteine 44, cysteine 108, and cysteine 139.

It belongs to the complex I 20 kDa subunit family. NDH is composed of at least 16 different subunits, 5 of which are encoded in the nucleus. [4Fe-4S] cluster is required as a cofactor.

The protein resides in the plastid. It is found in the chloroplast thylakoid membrane. It carries out the reaction a plastoquinone + NADH + (n+1) H(+)(in) = a plastoquinol + NAD(+) + n H(+)(out). The enzyme catalyses a plastoquinone + NADPH + (n+1) H(+)(in) = a plastoquinol + NADP(+) + n H(+)(out). Its function is as follows. NDH shuttles electrons from NAD(P)H:plastoquinone, via FMN and iron-sulfur (Fe-S) centers, to quinones in the photosynthetic chain and possibly in a chloroplast respiratory chain. The immediate electron acceptor for the enzyme in this species is believed to be plastoquinone. Couples the redox reaction to proton translocation, and thus conserves the redox energy in a proton gradient. The chain is NAD(P)H-quinone oxidoreductase subunit K, chloroplastic from Ranunculus macranthus (Large buttercup).